The primary structure comprises 596 residues: uncharacterized protein (596 aa).

An N-terminal signal peptide occupies residues 1–20 (MRYKPLLLALMLVFSTPAVA). 2 stretches are compositionally biased toward basic and acidic residues: residues 25-90 (AHNR…KEAT) and 161-184 (VRSDKNGKAVKQDKKYREEKNAKT). Residues 25 to 184 (AHNRSAEVKK…KYREEKNAKT (160 aa)) are disordered. Coiled coils occupy residues 177–281 (REEK…RFVS) and 318–454 (NREV…TAED).

It belongs to the peptidase M23B family.

This is an uncharacterized protein from Neisseria meningitidis serogroup B (strain ATCC BAA-335 / MC58).